A 292-amino-acid chain; its full sequence is Aquaporin-3 (292 aa).

Residues 1–24 (MGRQKELVSRCGEMLHIRYRLLRQ) are Cytoplasmic-facing. Residues 25-42 (ALAECLGTLILVMFGCGS) form a helical membrane-spanning segment. Residues 43–56 (VAQVVLSRGTHGGF) are Extracellular-facing. Residues 57–74 (LTINLAFGFAVTLGILIA) traverse the membrane as a helical segment. Over 75 to 78 (GQVS) the chain is Cytoplasmic. The segment at residues 79-92 (GAHLNPAVTFAMCF) is an intramembrane region (discontinuously helical). The NPA 1 signature appears at 83 to 85 (NPA). The Cytoplasmic segment spans residues 93–100 (LAREPWIK). The chain crosses the membrane as a helical span at residues 101–121 (LPIYTLAQTLGAFLGAGIVFG). At 122–159 (LYYDAIWHFADNQLFVSGPNGTAGIFATYPSGHLDMIN) the chain is on the extracellular side. Residue Asn141 is glycosylated (N-linked (GlcNAc...) asparagine). Residues 160 to 177 (GFFDQFIGTASLIVCVLA) form a helical membrane-spanning segment. The Cytoplasmic portion of the chain corresponds to 178–189 (IVDPYNNPVPRG). The helical transmembrane segment at 190 to 206 (LEAFTVGLVVLVIGTSM) threads the bilayer. At 207–210 (GFNS) the chain is on the extracellular side. The segment at residues 211-224 (GYAVNPARDFGPRL) is an intramembrane region (discontinuously helical). Residues 215-217 (NPA) carry the NPA 2 motif. At 225–242 (FTALAGWGSAVFTTGQHW) the chain is on the extracellular side. Residues 243–264 (WWVPIVSPLLGSIAGVFVYQLM) traverse the membrane as a helical segment. Residues 265–292 (IGCHLEQPPPSNEEENVKLAHVKHKEQI) are Cytoplasmic-facing.

This sequence belongs to the MIP/aquaporin (TC 1.A.8) family. Homotetramer; each monomer provides an independent glycerol/water pore. Could also exist in other oligomeric states. In terms of tissue distribution, widely expressed in epithelial cells of kidney (collecting ducts) and airways, in keratinocytes, immature dendritic cells and erythrocytes. Isoform 2 is not detectable in erythrocytes at the protein level.

The protein localises to the cell membrane. It is found in the basolateral cell membrane. The catalysed reaction is glycerol(in) = glycerol(out). The enzyme catalyses H2O(in) = H2O(out). It carries out the reaction H2O2(out) = H2O2(in). It catalyses the reaction urea(in) = urea(out). Its activity is regulated as follows. Glycerol transport is regulated by pH, with the porin being permeable to glycerol at pH 7.4 but not at pH 5.5. Water permeability, however, is not influenced by pH. Functionally, aquaglyceroporins form homotetrameric transmembrane channels, with each monomer independently mediating glycerol and water transport across the plasma membrane along their osmotic gradient. Could also be permeable to urea. Also participates in cell permeability to H2O2 and H2O2-mediated signaling. In skin, transports glycerol to the epidermis and stratum corneum, where it maintains hydration, elasticity, and supports lipid biosynthesis for barrier repair. In kidney, contributes to the reabsorption of water, helping the body maintain proper fluid balance. The polypeptide is Aquaporin-3 (Homo sapiens (Human)).